A 447-amino-acid chain; its full sequence is N-succinylarginine dihydrolase (447 aa).

Substrate-binding positions include 19–28, asparagine 110, and 137–138; these read AGLSFGNEAS and HR. Residue glutamate 174 is part of the active site. Substrate is bound at residue arginine 212. Residue histidine 248 is part of the active site. Residues aspartate 250 and asparagine 359 each coordinate substrate. Cysteine 365 functions as the Nucleophile in the catalytic mechanism.

The protein belongs to the succinylarginine dihydrolase family. As to quaternary structure, homodimer.

The catalysed reaction is N(2)-succinyl-L-arginine + 2 H2O + 2 H(+) = N(2)-succinyl-L-ornithine + 2 NH4(+) + CO2. Its pathway is amino-acid degradation; L-arginine degradation via AST pathway; L-glutamate and succinate from L-arginine: step 2/5. Its function is as follows. Catalyzes the hydrolysis of N(2)-succinylarginine into N(2)-succinylornithine, ammonia and CO(2). The chain is N-succinylarginine dihydrolase from Salmonella paratyphi A (strain ATCC 9150 / SARB42).